The sequence spans 587 residues: Bifunctional dihydrofolate reductase-thymidylate synthase (587 aa).

A DHFR domain is found at 9–237 (DIYAICACCK…TTLDFIIYSK (229 aa)). Residue 36–42 (GIGNAGV) participates in NADP(+) binding. Aspartate 51 lines the substrate pocket. NADP(+) contacts are provided by residues 108-110 (KKS) and 129-132 (LSRT). 3 residues coordinate substrate: isoleucine 173, tyrosine 179, and threonine 194. Position 174-181 (174-181 (GGSSVYKE)) interacts with NADP(+). The thymidylate synthase stretch occupies residues 301–587 (NHPEYQYLNI…HDKINMDMAA (287 aa)). Arginine 324 provides a ligand contact to dUMP. Cysteine 469 is a catalytic residue. Residues histidine 470, 488-492 (QRSCD), asparagine 500, and 530-532 (HVY) contribute to the dUMP site.

It in the N-terminal section; belongs to the dihydrofolate reductase family. This sequence in the C-terminal section; belongs to the thymidylate synthase family. As to quaternary structure, homodimer.

It carries out the reaction (6S)-5,6,7,8-tetrahydrofolate + NADP(+) = 7,8-dihydrofolate + NADPH + H(+). It catalyses the reaction dUMP + (6R)-5,10-methylene-5,6,7,8-tetrahydrofolate = 7,8-dihydrofolate + dTMP. It functions in the pathway cofactor biosynthesis; tetrahydrofolate biosynthesis; 5,6,7,8-tetrahydrofolate from 7,8-dihydrofolate: step 1/1. Its function is as follows. Bifunctional enzyme. Involved in de novo dTMP biosynthesis. Key enzyme in folate metabolism. Catalyzes an essential reaction for de novo glycine and purine synthesis, DNA precursor synthesis, and for the conversion of dUMP to dTMP. The sequence is that of Bifunctional dihydrofolate reductase-thymidylate synthase from Plasmodium berghei (strain Anka).